A 167-amino-acid chain; its full sequence is uncharacterized protein (167 aa).

Residues 1–148 form the N-acetyltransferase domain; it reads MLIRVEIPID…SAFQVHRLAD (148 aa).

The protein belongs to the acetyltransferase family.

This is an uncharacterized protein from Escherichia coli O157:H7.